The primary structure comprises 557 residues: Potassium-transporting ATPase potassium-binding subunit (557 aa).

The next 10 membrane-spanning stretches (helical) occupy residues leucine 4–proline 24, threonine 61–leucine 81, glycine 131–valine 151, leucine 174–valine 194, leucine 253–valine 273, leucine 280–alanine 300, glycine 375–glycine 395, cysteine 412–leucine 432, leucine 483–phenylalanine 503, and leucine 528–isoleucine 548.

The protein belongs to the KdpA family. The system is composed of three essential subunits: KdpA, KdpB and KdpC.

It is found in the cell membrane. In terms of biological role, part of the high-affinity ATP-driven potassium transport (or Kdp) system, which catalyzes the hydrolysis of ATP coupled with the electrogenic transport of potassium into the cytoplasm. This subunit binds the extracellular potassium ions and delivers the ions to the membrane domain of KdpB through an intramembrane tunnel. The chain is Potassium-transporting ATPase potassium-binding subunit from Kineococcus radiotolerans (strain ATCC BAA-149 / DSM 14245 / SRS30216).